Reading from the N-terminus, the 489-residue chain is N-succinylglutamate 5-semialdehyde dehydrogenase (489 aa).

An NAD(+)-binding site is contributed by 224–229; it reads GSAKVG. Catalysis depends on residues Glu247 and Cys281.

It belongs to the aldehyde dehydrogenase family. AstD subfamily.

It catalyses the reaction N-succinyl-L-glutamate 5-semialdehyde + NAD(+) + H2O = N-succinyl-L-glutamate + NADH + 2 H(+). It participates in amino-acid degradation; L-arginine degradation via AST pathway; L-glutamate and succinate from L-arginine: step 4/5. Functionally, catalyzes the NAD-dependent reduction of succinylglutamate semialdehyde into succinylglutamate. This Chromohalobacter salexigens (strain ATCC BAA-138 / DSM 3043 / CIP 106854 / NCIMB 13768 / 1H11) protein is N-succinylglutamate 5-semialdehyde dehydrogenase.